The chain runs to 460 residues: Mogroside I-E synthase (460 aa).

His25 acts as the Proton acceptor in catalysis. The Charge relay role is filled by Asp114. UDP-alpha-D-glucose-binding residues include Ser286, Cys339, Gln341, Trp359, Asn360, Ser361, Glu364, Asp380, and Gln381.

The protein belongs to the UDP-glycosyltransferase family. Highly expressed in young fruits 15 days after anthesis (15-DAA).

It catalyses the reaction mogrol + UDP-alpha-D-glucose = mogroside IE + UDP + H(+). The enzyme catalyses mogroside I-A1 + UDP-alpha-D-glucose = mogroside IIE + UDP + H(+). It carries out the reaction mogroside II-A1 + UDP-alpha-D-glucose = mogroside IIIX + UDP + H(+). The catalysed reaction is mogroside II-A + UDP-alpha-D-glucose = mogroside III + UDP + H(+). It catalyses the reaction mogroside III-A1 + UDP-alpha-D-glucose = siamenoside I + UDP + H(+). It participates in secondary metabolite biosynthesis; terpenoid biosynthesis. UDP-glycosyltransferase involved in the biosynthesis of cucurbitacin and mogroside tetracyclic triterpene natural products (e.g. siamenoside I and mogrosides IV, V and VI). Cucurbitacins have cytotoxic properties and exhibit deterrent taste as a defense barrier against herbivores. Mogrosides are nonsugar highly oxygenated compounds used as high-intensity zero-calorie sweeteners; they also possess pharmacological properties such as regulating immunity, lowering blood sugar and lipid levels, protecting the liver, and acting as antioxidants and antitumor agents. Catalyzes the C3 primary glucosylation of mogrol, mogroside I-A1, mogroside II-A1, mogroside II-A and mogroside III-A1. The protein is Mogroside I-E synthase of Siraitia grosvenorii (Monk's fruit).